An 859-amino-acid chain; its full sequence is Cadherin-related family member 1 (859 aa).

The signal sequence occupies residues 1–19; sequence MRRCRWAALALGLLRLCLA. Residues 20–700 lie on the Extracellular side of the membrane; that stretch reads QANFAPHFFD…LIQTKDNPMK (681 aa). 6 Cadherin domains span residues 36–135, 136–246, 247–353, 359–472, 473–576, and 573–688; these read NGNM…APRF, IQEP…APVF, VGTP…PPTF, PQNR…VPKF, DSLY…PPQF, and PPQF…SPMA. Asn-58 and Asn-89 each carry an N-linked (GlcNAc...) asparagine glycan. Asn-296 carries N-linked (GlcNAc...) asparagine glycosylation. Residues 701–721 traverse the membrane as a helical segment; sequence AVGVLAGTMATVVAITVLIST. Over 722-859 the chain is Cytoplasmic; sequence ATFWRNKKSN…KKSVHNKAYF (138 aa). Residues 770–838 form a disordered region; it reads KEKPPNENCN…PKTMGSPVQS (69 aa). Positions 775–791 are enriched in low complexity; sequence NENCNNNSPESSLLPRA.

As to quaternary structure, interacts with PROM1. Post-translationally, undergoes proteolytic cleavage; produces a soluble 95 kDa N-terminal fragment and a 25 kDa cell-associated C-terminal fragment.

The protein localises to the cell membrane. Its function is as follows. Potential calcium-dependent cell-adhesion protein. May be required for the structural integrity of the outer segment (OS) of photoreceptor cells. The chain is Cadherin-related family member 1 from Homo sapiens (Human).